The chain runs to 261 residues: 3-hydroxyacyl-CoA dehydrogenase type-2 (261 aa).

At Ala-2 the chain carries N-acetylalanine. NAD(+)-binding residues include Ser-20 and Asp-41. Lys-53 is subject to N6-acetyllysine; alternate. Lys-53 carries the post-translational modification N6-succinyllysine; alternate. An NAD(+)-binding site is contributed by Val-65. Lys-69 is modified (N6-acetyllysine). Cys-91 contacts NAD(+). 2 positions are modified to N6-acetyllysine: Lys-99 and Lys-105. The residue at position 107 (Lys-107) is an N6-acetyllysine; alternate. At Lys-107 the chain carries N6-succinyllysine; alternate. A substrate-binding site is contributed by Ser-155. Residues Tyr-168, Lys-172, Phe-201, and Thr-203 each coordinate NAD(+). Tyr-168 (proton acceptor) is an active-site residue. The residue at position 212 (Lys-212) is an N6-acetyllysine; alternate. Residue Lys-212 is modified to N6-succinyllysine; alternate.

It belongs to the short-chain dehydrogenases/reductases (SDR) family. As to quaternary structure, homotetramer. Component of mitochondrial ribonuclease P, a complex composed of TRMT10C/MRPP1, HSD17B10/MRPP2 and PRORP/MRPP3. Interacts with TRMT10C/MRPP1; forming the MRPP1-MRPP2 subcomplex of the mitochondrial ribonuclease P complex.

It is found in the mitochondrion. Its subcellular location is the mitochondrion matrix. The protein resides in the mitochondrion nucleoid. It carries out the reaction a (3S)-3-hydroxyacyl-CoA + NAD(+) = a 3-oxoacyl-CoA + NADH + H(+). It catalyses the reaction (2S,3S)-3-hydroxy-2-methylbutanoyl-CoA + NAD(+) = 2-methyl-3-oxobutanoyl-CoA + NADH + H(+). The enzyme catalyses testosterone + NAD(+) = androst-4-ene-3,17-dione + NADH + H(+). The catalysed reaction is 5alpha-androstane-3alpha,17beta-diol + NAD(+) = 17beta-hydroxy-5alpha-androstan-3-one + NADH + H(+). It carries out the reaction 17beta-estradiol + NAD(+) = estrone + NADH + H(+). It catalyses the reaction cholate + NAD(+) = 3alpha,12alpha-dihydroxy-7-oxo-5beta-cholanate + NADH + H(+). The enzyme catalyses (3S)-3-hydroxybutanoyl-CoA + NAD(+) = acetoacetyl-CoA + NADH + H(+). The catalysed reaction is (3S)-hydroxyoctanoyl-CoA + NAD(+) = 3-oxooctanoyl-CoA + NADH + H(+). It carries out the reaction (3S)-hydroxyhexadecanoyl-CoA + NAD(+) = 3-oxohexadecanoyl-CoA + NADH + H(+). It catalyses the reaction 17beta-hydroxy-5alpha-androstan-3-one + NAD(+) = 5alpha-androstan-3,17-dione + NADH + H(+). The enzyme catalyses 5alpha-pregnan-20beta-ol-3-one + NAD(+) = 5alpha-pregnane-3,20-dione + NADH + H(+). The catalysed reaction is 3alpha-hydroxy-5alpha-pregnan-20-one + NAD(+) = 5alpha-pregnane-3,20-dione + NADH + H(+). It carries out the reaction cortisone + NAD(+) = 17alpha-hydroxypregn-4-en-3,11,20-trione-21-al + NADH + H(+). It catalyses the reaction 11-dehydrocorticosterone + NAD(+) = pregn-4-ene-3,11,20,21-tetraone + NADH + H(+). The enzyme catalyses cortisol + NAD(+) = 11beta,17alpha-dihydroxypregn-4-ene-3,20,21-trione + NADH + H(+). The catalysed reaction is chenodeoxycholate + NAD(+) = 7-oxolithocholate + NADH + H(+). It carries out the reaction ursodeoxycholate + NAD(+) = 7-oxolithocholate + NADH + H(+). It catalyses the reaction 3beta,7beta-dihydroxy-5beta-cholan-24-oate + NAD(+) = 3beta-hydroxy-7-oxo-5beta-cholan-24-oate + NADH + H(+). Its pathway is amino-acid degradation; L-isoleucine degradation. It functions in the pathway lipid metabolism; fatty acid beta-oxidation. The protein operates within steroid metabolism. It participates in lipid metabolism; bile acid biosynthesis. In terms of biological role, mitochondrial dehydrogenase involved in pathways of fatty acid, branched-chain amino acid and steroid metabolism. Acts as (S)-3-hydroxyacyl-CoA dehydrogenase in mitochondrial fatty acid beta-oxidation, a major degradation pathway of fatty acids. Catalyzes the third step in the beta-oxidation cycle, namely the reversible conversion of (S)-3-hydroxyacyl-CoA to 3-ketoacyl-CoA. Preferentially accepts straight medium- and short-chain acyl-CoA substrates with highest efficiency for (3S)-hydroxybutanoyl-CoA. Acts as 3-hydroxy-2-methylbutyryl-CoA dehydrogenase in branched-chain amino acid catabolic pathway. Catalyzes the oxidation of 3-hydroxy-2-methylbutanoyl-CoA into 2-methyl-3-oxobutanoyl-CoA, a step in isoleucine degradation pathway. Has hydroxysteroid dehydrogenase activity toward steroid hormones and bile acids. Catalyzes the oxidation of 3alpha-, 17beta-, 20beta- and 21-hydroxysteroids and 7alpha- and 7beta-hydroxy bile acids. Oxidizes allopregnanolone/brexanolone at the 3alpha-hydroxyl group, which is known to be critical for the activation of gamma-aminobutyric acid receptors (GABAARs) chloride channel. Has phospholipase C-like activity toward cardiolipin and its oxidized species. Likely oxidizes the 2'-hydroxyl in the head group of cardiolipin to form a ketone intermediate that undergoes nucleophilic attack by water and fragments into diacylglycerol, dihydroxyacetone and orthophosphate. Has higher affinity for cardiolipin with oxidized fatty acids and may degrade these species during the oxidative stress response to protect cells from apoptosis. By interacting with intracellular amyloid-beta, it may contribute to the neuronal dysfunction associated with Alzheimer disease (AD). Essential for structural and functional integrity of mitochondria. In addition to mitochondrial dehydrogenase activity, moonlights as a component of mitochondrial ribonuclease P, a complex that cleaves tRNA molecules in their 5'-ends. Together with TRMT10C/MRPP1, forms a subcomplex of the mitochondrial ribonuclease P, named MRPP1-MRPP2 subcomplex, which displays functions that are independent of the ribonuclease P activity. The MRPP1-MRPP2 subcomplex catalyzes the formation of N(1)-methylguanine and N(1)-methyladenine at position 9 (m1G9 and m1A9, respectively) in tRNAs; HSD17B10/MRPP2 acting as a non-catalytic subunit. The MRPP1-MRPP2 subcomplex also acts as a tRNA maturation platform: following 5'-end cleavage by the mitochondrial ribonuclease P complex, the MRPP1-MRPP2 subcomplex enhances the efficiency of 3'-processing catalyzed by ELAC2, retains the tRNA product after ELAC2 processing and presents the nascent tRNA to the mitochondrial CCA tRNA nucleotidyltransferase TRNT1 enzyme. Associates with mitochondrial DNA complexes at the nucleoids to initiate RNA processing and ribosome assembly. The protein is 3-hydroxyacyl-CoA dehydrogenase type-2 (Hsd17b10) of Mus musculus (Mouse).